The sequence spans 66 residues: Small ribosomal subunit protein bS21 (66 aa).

The protein belongs to the bacterial ribosomal protein bS21 family.

This Rickettsia typhi (strain ATCC VR-144 / Wilmington) protein is Small ribosomal subunit protein bS21.